Consider the following 304-residue polypeptide: MSGGLDVLQMKEEDVLKFLAAGTHLGGTNLDFQMDQYVYKRKSDGVYIINLKKTWEKLLLAARAIVAIENPADVCVISSRNTGQRAVLKFASATGATTFHGRFTPGTFTNQIQAAFREPRLLIVTDPRADHQPLTEASYVNIPTIALCNTDSPLRYVDIAIPCNNKGHHSVGLMWWMLAREVLRMRGTISREHPWEVMPDLYFYRDPEEIEKEEQAAAEKAVGKEEFQGEWSAPAAEFTQPEVADWSEGVAVPSVPIQQFPAGTPAPAPAVKTEDWSTQPATEDWSTAPTAQASDWGGATSDWS.

An N-acetylserine modification is found at serine 2. Laminin-binding regions lie at residues 161–180 and 205–229; these read IPCN…MLAR and RDPE…EFQG. 5 [DE]-W-[ST] repeats span residues 230–232, 245–247, 275–277, 284–286, and 302–304; these read EWS and DWS. Positions 242–304 are laminin-binding; sequence EVADWSEGVA…DWGGATSDWS (63 aa). The disordered stretch occupies residues 257-304; that stretch reads IQQFPAGTPAPAPAVKTEDWSTQPATEDWSTAPTAQASDWGGATSDWS. Residues 276–293 show a composition bias toward polar residues; sequence WSTQPATEDWSTAPTAQA.

It belongs to the universal ribosomal protein uS2 family. In terms of assembly, monomer (37LRP) and homodimer (67LR). Component of the small ribosomal subunit. Mature ribosomes consist of a small (40S) and a large (60S) subunit. The 40S subunit contains about 33 different proteins and 1 molecule of RNA (18S). The 60S subunit contains about 49 different proteins and 3 molecules of RNA (28S, 5.8S and 5S). Interacts with rps21. Interacts with several laminins including at least lamb1. Interacts with mdk. Post-translationally, acylated. Acylation may be a prerequisite for conversion of the monomeric 37 kDa laminin receptor precursor (37LRP) to the mature dimeric 67 kDa laminin receptor (67LR), and may provide a mechanism for membrane association. Cleaved by stromelysin-3 (ST3) at the cell surface. Cleavage by stromelysin-3 may be a mechanism to alter cell-extracellular matrix interactions.

Its subcellular location is the cell membrane. It is found in the cytoplasm. The protein localises to the nucleus. Functionally, required for the assembly and/or stability of the 40S ribosomal subunit. Required for the processing of the 20S rRNA-precursor to mature 18S rRNA in a late step of the maturation of 40S ribosomal subunits. Also functions as a cell surface receptor for laminin. Plays a role in cell adhesion to the basement membrane and in the consequent activation of signaling transduction pathways. May play a role in cell fate determination and tissue morphogenesis. This is Small ribosomal subunit protein uS2 (rpsa) from Sparus aurata (Gilthead sea bream).